A 78-amino-acid polypeptide reads, in one-letter code: uncharacterized protein (78 aa).

The first 22 residues, 1 to 22 (MFKKSVLFATLLSGVMAFSTNA), serve as a signal peptide directing secretion.

This sequence belongs to the BhsA/McbA family.

It localises to the periplasm. In terms of biological role, probably involved in reactive chlorine species (RCS) stress resistance. This is an uncharacterized protein from Escherichia coli (strain K12).